Consider the following 100-residue polypeptide: uncharacterized protein (100 aa).

2 helical membrane passes run 1-21 (MLVL…YKVK) and 54-74 (MILF…VIGA).

The protein resides in the cell membrane. This is an uncharacterized protein from Bacillus subtilis (strain 168).